We begin with the raw amino-acid sequence, 287 residues long: PAK4-inhibitor INKA1 (287 aa).

Disordered regions lie at residues 22–59 (GRDT…LEED) and 138–157 (SRAP…KSTP). A compositionally biased stretch (polar residues) spans 35 to 50 (QPTSQTGPDVQPSHQL). Low complexity predominate over residues 138-147 (SRAPVASVPP). Inka box stretches follow at residues 168 to 205 (EAED…ELPE) and 261 to 287 (PADV…VSYL).

This sequence belongs to the INKA family. In terms of assembly, interacts with PAK4.

It is found in the nucleus. Its subcellular location is the cytoplasm. Its function is as follows. Inhibitor of the serine/threonine-protein kinase PAK4. Acts by binding PAK4 in a substrate-like manner, inhibiting the protein kinase activity. This Homo sapiens (Human) protein is PAK4-inhibitor INKA1.